The sequence spans 1291 residues: Capping protein-inhibiting regulator of actin dynamics (1291 aa).

2 positions are modified to phosphoserine: S7 and S28. 6 disordered regions span residues 48 to 71 (KFGQ…SSEE), 84 to 137 (QQDI…AGTI), 159 to 221 (HKLA…HEEK), 234 to 253 (KCKR…EQRR), 267 to 663 (QELL…ASHA), and 701 to 1238 (LGLS…TSVT). At S132 the chain carries Phosphoserine. Residues 159–176 (HKLAVKPKNQRVSRKHRW) show a composition bias toward basic residues. Residues 184 to 199 (EPGSFESQSSLDQNGQ) show a composition bias toward polar residues. A compositionally biased stretch (basic and acidic residues) spans 201–221 (GEDKHIWHGEEPEPLESHEEK). A compositionally biased stretch (acidic residues) spans 270-291 (LEEEEEGEEEEEVKEEGEEGEE). Basic and acidic residues-rich tracts occupy residues 302–318 (PPEE…RCTE), 326–461 (DPAR…EDAK), and 470–483 (EAKR…KETP). The tract at residues 324-560 (ADDPARLEAE…DLDAHCGGVD (237 aa)) is required for interaction with actin-capping proteins. Phosphothreonine is present on T482. A phosphoserine mark is found at S493 and S510. 2 stretches are compositionally biased toward basic and acidic residues: residues 506–527 (ADQR…REDL) and 534–543 (EIAEEPRGEG). Residues 580 to 593 (EGTPAPEENEATAA) show a composition bias toward low complexity. Over residues 594–612 (DIDRKVEELRWQEVDERQT) the composition is skewed to basic and acidic residues. Position 636 is a phosphoserine (S636). The residue at position 639 (T639) is a Phosphothreonine. Residues 749 to 778 (KNSEGDQRGDREPARAGDEPVPRARCDSRG) show a composition bias toward basic and acidic residues. S867 is subject to Phosphoserine. Over residues 875–888 (TESTTTLDSETTSD) the composition is skewed to low complexity. Residues 969 to 983 (QERKPALSPRKDSAE) show a composition bias toward basic and acidic residues. Position 1033 is a phosphothreonine (T1033). S1037 is subject to Phosphoserine. Over residues 1056 to 1070 (GKLDSEPSETAKESS) the composition is skewed to basic and acidic residues. S1076 is modified (phosphoserine). 3 stretches are compositionally biased toward basic and acidic residues: residues 1081 to 1098 (EELK…EKKP), 1117 to 1141 (TGRK…EKVE), and 1157 to 1182 (GFRE…KLSK). Composition is skewed to polar residues over residues 1183–1197 (ETVS…SRAS) and 1229–1238 (KSNTLPTSVT).

Directly interacts with actin-capping proteins CAPZA1, CAPZA2 and CAPZB; this interaction decreases the binding of capping proteins to actin. In terms of tissue distribution, expressed in the small intestine (at protein level).

The protein localises to the cytoplasm. It is found in the cytosol. Its function is as follows. Involved in epithelial cell integrity by acting on the dynamics of the actin cytoskeleton. Positively regulates the actin polymerization, by inhibiting the interaction of actin-capping proteins with actin. This chain is Capping protein-inhibiting regulator of actin dynamics, found in Mus musculus (Mouse).